The sequence spans 865 residues: Alanine--tRNA ligase (865 aa).

Zn(2+)-binding residues include His568, His572, Cys670, and His674.

Belongs to the class-II aminoacyl-tRNA synthetase family. Zn(2+) is required as a cofactor.

The protein resides in the cytoplasm. It carries out the reaction tRNA(Ala) + L-alanine + ATP = L-alanyl-tRNA(Ala) + AMP + diphosphate. Catalyzes the attachment of alanine to tRNA(Ala) in a two-step reaction: alanine is first activated by ATP to form Ala-AMP and then transferred to the acceptor end of tRNA(Ala). Also edits incorrectly charged Ser-tRNA(Ala) and Gly-tRNA(Ala) via its editing domain. This chain is Alanine--tRNA ligase, found in Vibrio campbellii (strain ATCC BAA-1116).